Consider the following 121-residue polypeptide: Small ribosomal subunit protein uS13 (121 aa).

The segment at 94 to 121 (GLPVRGQRTRTNARTRKGPRKGAAALKK) is disordered.

This sequence belongs to the universal ribosomal protein uS13 family. Part of the 30S ribosomal subunit. Forms a loose heterodimer with protein S19. Forms two bridges to the 50S subunit in the 70S ribosome.

Functionally, located at the top of the head of the 30S subunit, it contacts several helices of the 16S rRNA. In the 70S ribosome it contacts the 23S rRNA (bridge B1a) and protein L5 of the 50S subunit (bridge B1b), connecting the 2 subunits; these bridges are implicated in subunit movement. Contacts the tRNAs in the A and P-sites. The sequence is that of Small ribosomal subunit protein uS13 from Verminephrobacter eiseniae (strain EF01-2).